The primary structure comprises 238 residues: Uridylate kinase (238 aa).

Residue 12 to 15 (KLSG) coordinates ATP. An involved in allosteric activation by GTP region spans residues 20 to 25 (GDEGFG). Gly54 is a UMP binding site. ATP-binding residues include Gly55 and Arg59. Residues Asp74 and 135 to 142 (TGSPFFTT) contribute to the UMP site. 3 residues coordinate ATP: Thr162, Tyr168, and Asp171.

This sequence belongs to the UMP kinase family. In terms of assembly, homohexamer.

It is found in the cytoplasm. The catalysed reaction is UMP + ATP = UDP + ADP. It participates in pyrimidine metabolism; CTP biosynthesis via de novo pathway; UDP from UMP (UMPK route): step 1/1. Its activity is regulated as follows. Allosterically activated by GTP. Inhibited by UTP. Its function is as follows. Catalyzes the reversible phosphorylation of UMP to UDP. In Histophilus somni (strain 129Pt) (Haemophilus somnus), this protein is Uridylate kinase.